The sequence spans 298 residues: Protein BZR1 homolog 1 (298 aa).

4 disordered regions span residues 1–25, 71–129, 153–175, and 190–217; these read MTSG…RRER, GTTY…SPSR, VSSS…PKIR, and AVSA…ESDV. A required for DNA-binding region spans residues 10–91; the sequence is RTPTWKEREN…PSSAGGASVG (82 aa). Residues 96 to 128 are compositionally biased toward low complexity; that stretch reads SSTQLLSAPSSSFPSPVPSYHASPASSSFPSPS. Ser-156 carries the post-translational modification Phosphoserine. Residues 204–224 form a PEST-like region; it reads EHPDTIPECDESDVSTVDSGR.

The protein belongs to the BZR/LAT61 family. In terms of assembly, interacts with GF14C. Interacts with PUB24. Interacts with SMOS1. Post-translationally, phosphorylated on serine and threonine residues by GSK2. Dephosphorylated during response to brassinosteroid. In terms of processing, ubiquitinated by PUB24. Ubiquitination leads to its subsequent degradation by the 26S proteasome, thus reducing sensitivity to brassinosteroid signaling.

It localises to the nucleus. The protein localises to the cytoplasm. In terms of biological role, positive brassinosteroid-signaling protein. Mediates downstream brassinosteroid-regulated growth response and feedback inhibition of brassinosteroid (BR) biosynthetic genes. May act as transcriptional repressor by binding the brassinosteroid-response element (BREE) (5'-CGTG(T/C)G-3') in the promoter of DLT (AC Q9LWU9), another positive regulator of BR signaling. Acts as a transcriptional repressor of LIC, a negative regulator of BR signaling, by binding to the BRRE element of its promoter. BZR1 and LIC play opposite roles in BR signaling and regulation of leaf bending. The protein is Protein BZR1 homolog 1 of Oryza sativa subsp. japonica (Rice).